Here is a 293-residue protein sequence, read N- to C-terminus: Ribonuclease Z (293 aa).

Zn(2+) contacts are provided by H60, H62, D64, H65, H132, D200, and H256. D64 (proton acceptor) is an active-site residue.

The protein belongs to the RNase Z family. As to quaternary structure, homodimer. It depends on Zn(2+) as a cofactor.

It catalyses the reaction Endonucleolytic cleavage of RNA, removing extra 3' nucleotides from tRNA precursor, generating 3' termini of tRNAs. A 3'-hydroxy group is left at the tRNA terminus and a 5'-phosphoryl group is left at the trailer molecule.. Functionally, zinc phosphodiesterase, which displays some tRNA 3'-processing endonuclease activity. Probably involved in tRNA maturation, by removing a 3'-trailer from precursor tRNA. The protein is Ribonuclease Z of Sulfurisphaera tokodaii (strain DSM 16993 / JCM 10545 / NBRC 100140 / 7) (Sulfolobus tokodaii).